Here is a 115-residue protein sequence, read N- to C-terminus: NADH-ubiquinone oxidoreductase chain 3 (115 aa).

3 helical membrane passes run 3 to 23 (VMLT…IAFW), 55 to 75 (FFLV…LLPL), and 84 to 104 (LTTM…SLAY).

This sequence belongs to the complex I subunit 3 family. Core subunit of respiratory chain NADH dehydrogenase (Complex I) which is composed of 45 different subunits. Interacts with TMEM186. Interacts with TMEM242.

The protein resides in the mitochondrion inner membrane. It carries out the reaction a ubiquinone + NADH + 5 H(+)(in) = a ubiquinol + NAD(+) + 4 H(+)(out). Its function is as follows. Core subunit of the mitochondrial membrane respiratory chain NADH dehydrogenase (Complex I) which catalyzes electron transfer from NADH through the respiratory chain, using ubiquinone as an electron acceptor. Essential for the catalytic activity of complex I. In Canis lupus familiaris (Dog), this protein is NADH-ubiquinone oxidoreductase chain 3.